The sequence spans 532 residues: Metal-staphylopine-binding protein CntA (532 aa).

An N-terminal signal peptide occupies residues 1–20; that stretch reads MRKLTKMSAMLLASGLILTG. Cysteine 21 is lipidated: N-palmitoyl cysteine. Residue cysteine 21 is the site of S-diacylglycerol cysteine attachment. Residues arginine 165, arginine 418, and asparagine 448 each contribute to the staphylopine site.

It belongs to the bacterial solute-binding protein 5 family. In terms of assembly, the complex is composed of two ATP-binding proteins (CntD and CntF), two transmembrane proteins (CntB and CntC) and a solute-binding protein (CntA).

It is found in the cell membrane. With respect to regulation, nickel/cobalt import is reduced in the presence of zinc. Part of the ABC transporter complex CntABCDF (Opp1) involved in the uptake of metal in complex with the metallophore staphylopine (StP). Involved in the import of divalent metals ions such as nickel, cobalt and zinc. Binds the metal via the metallophore StP, and transfers the StP-metal complex to the membrane-bound permease. Binds one molecule of StP/metal. Binds StP/Co(2+) and StP/Ni(2+) tighter than StP/Zn(2+). Plays a major role in nickel/cobalt import in zinc-depleted conditions. Contributes to virulence. Required for full urease activity in vitro. The protein is Metal-staphylopine-binding protein CntA of Staphylococcus aureus (strain NCTC 8325 / PS 47).